A 382-amino-acid chain; its full sequence is 1-deoxy-D-xylulose 5-phosphate reductoisomerase (382 aa).

Residues threonine 10, glycine 11, serine 12, isoleucine 13, glycine 36, and asparagine 122 each contribute to the NADPH site. Lysine 123 contacts 1-deoxy-D-xylulose 5-phosphate. An NADPH-binding site is contributed by glutamate 124. Residue aspartate 148 coordinates Mn(2+). Residues serine 149, glutamate 150, serine 174, and histidine 197 each contribute to the 1-deoxy-D-xylulose 5-phosphate site. Residue glutamate 150 participates in Mn(2+) binding. Glycine 203 is a binding site for NADPH. 1-deoxy-D-xylulose 5-phosphate is bound by residues serine 210, asparagine 215, lysine 216, and glutamate 219. Glutamate 219 contributes to the Mn(2+) binding site.

It belongs to the DXR family. Requires Mg(2+) as cofactor. Mn(2+) serves as cofactor.

The catalysed reaction is 2-C-methyl-D-erythritol 4-phosphate + NADP(+) = 1-deoxy-D-xylulose 5-phosphate + NADPH + H(+). It participates in isoprenoid biosynthesis; isopentenyl diphosphate biosynthesis via DXP pathway; isopentenyl diphosphate from 1-deoxy-D-xylulose 5-phosphate: step 1/6. Catalyzes the NADPH-dependent rearrangement and reduction of 1-deoxy-D-xylulose-5-phosphate (DXP) to 2-C-methyl-D-erythritol 4-phosphate (MEP). The chain is 1-deoxy-D-xylulose 5-phosphate reductoisomerase from Pelodictyon phaeoclathratiforme (strain DSM 5477 / BU-1).